The sequence spans 347 residues: GMP reductase (347 aa).

108-131 (ADFEKTKQILDLNPALNFVCIDVA) lines the NADP(+) pocket. K(+) is bound by residues Gly181 and Gly183. Residue Cys186 is the Thioimidate intermediate of the active site. 216–239 (IVSDGGCTTPGDVAKAFGGGADFV) contributes to the NADP(+) binding site.

It belongs to the IMPDH/GMPR family. GuaC type 1 subfamily. In terms of assembly, homotetramer.

The enzyme catalyses IMP + NH4(+) + NADP(+) = GMP + NADPH + 2 H(+). Catalyzes the irreversible NADPH-dependent deamination of GMP to IMP. It functions in the conversion of nucleobase, nucleoside and nucleotide derivatives of G to A nucleotides, and in maintaining the intracellular balance of A and G nucleotides. The chain is GMP reductase from Escherichia coli O139:H28 (strain E24377A / ETEC).